Reading from the N-terminus, the 366-residue chain is DNA-directed RNA polymerase subunit alpha (366 aa).

The interval 1–260 is alpha N-terminal domain (alpha-NTD); the sequence is MAISDNGGGS…DQLQSFIGSE (260 aa). Positions 274–366 are alpha C-terminal domain (alpha-CTD); sequence EGALPYDHNL…ENLSKQYSED (93 aa).

This sequence belongs to the RNA polymerase alpha chain family. Homodimer. The RNAP catalytic core consists of 2 alpha, 1 beta, 1 beta' and 1 omega subunit. When a sigma factor is associated with the core the holoenzyme is formed, which can initiate transcription.

It catalyses the reaction RNA(n) + a ribonucleoside 5'-triphosphate = RNA(n+1) + diphosphate. Functionally, DNA-dependent RNA polymerase catalyzes the transcription of DNA into RNA using the four ribonucleoside triphosphates as substrates. The sequence is that of DNA-directed RNA polymerase subunit alpha from Anaplasma marginale (strain St. Maries).